Reading from the N-terminus, the 98-residue chain is Large ribosomal subunit protein bL28 (98 aa).

The protein belongs to the bacterial ribosomal protein bL28 family.

The polypeptide is Large ribosomal subunit protein bL28 (Mesorhizobium japonicum (strain LMG 29417 / CECT 9101 / MAFF 303099) (Mesorhizobium loti (strain MAFF 303099))).